The following is a 112-amino-acid chain: Ribonuclease P protein component (112 aa).

This sequence belongs to the RnpA family. Consists of a catalytic RNA component (M1 or rnpB) and a protein subunit.

The catalysed reaction is Endonucleolytic cleavage of RNA, removing 5'-extranucleotides from tRNA precursor.. RNaseP catalyzes the removal of the 5'-leader sequence from pre-tRNA to produce the mature 5'-terminus. It can also cleave other RNA substrates such as 4.5S RNA. The protein component plays an auxiliary but essential role in vivo by binding to the 5'-leader sequence and broadening the substrate specificity of the ribozyme. The chain is Ribonuclease P protein component from Pelotomaculum thermopropionicum (strain DSM 13744 / JCM 10971 / SI).